Reading from the N-terminus, the 380-residue chain is 3-isopropylmalate dehydrogenase (380 aa).

79–90 (GPEWAGVHPTPE) contributes to the NAD(+) binding site. The substrate site is built by Arg-97, Arg-107, Arg-136, and Asp-229. Residues Asp-229, Asp-254, and Asp-258 each coordinate Mg(2+). 294–306 (GSAPDISGKGLAN) contributes to the NAD(+) binding site.

Belongs to the isocitrate and isopropylmalate dehydrogenases family. As to quaternary structure, homodimer. The cofactor is Mg(2+). Requires Mn(2+) as cofactor.

The protein resides in the cytoplasm. The catalysed reaction is (2R,3S)-3-isopropylmalate + NAD(+) = 4-methyl-2-oxopentanoate + CO2 + NADH. Its pathway is amino-acid biosynthesis; L-leucine biosynthesis; L-leucine from 3-methyl-2-oxobutanoate: step 3/4. Functionally, catalyzes the oxidation of 3-carboxy-2-hydroxy-4-methylpentanoate (3-isopropylmalate) to 3-carboxy-4-methyl-2-oxopentanoate. The product decarboxylates to 4-methyl-2 oxopentanoate. In Hapsidospora chrysogena (Acremonium chrysogenum), this protein is 3-isopropylmalate dehydrogenase (LEU2).